Reading from the N-terminus, the 151-residue chain is Ribosome maturation factor RimP (151 aa).

This sequence belongs to the RimP family.

It localises to the cytoplasm. In terms of biological role, required for maturation of 30S ribosomal subunits. This is Ribosome maturation factor RimP from Shewanella sp. (strain ANA-3).